Consider the following 266-residue polypeptide: Undecaprenyl-diphosphatase (266 aa).

8 helical membrane passes run 1-21, 39-59, 86-106, 117-137, 153-173, 190-210, 216-236, and 246-266; these read MDFLKFIFYGIIQGLTEFIPV, PGSSLSAIIQIGSVLAIFWYF, SIFIGTIPIVLIGGIVKLFVT, FSIAVVSILMSLIMFLADIST, FIGISQAFAIIPGVSRSGATI, SFLLGIPSISLAAFVEFITSI, FPFLPLFVGLITTFFSSLLAI, and NGLKIFIYYRLVFGILIILNL.

It belongs to the UppP family.

Its subcellular location is the cell inner membrane. The enzyme catalyses di-trans,octa-cis-undecaprenyl diphosphate + H2O = di-trans,octa-cis-undecaprenyl phosphate + phosphate + H(+). Functionally, catalyzes the dephosphorylation of undecaprenyl diphosphate (UPP). Confers resistance to bacitracin. The polypeptide is Undecaprenyl-diphosphatase (Prochlorococcus marinus (strain MIT 9515)).